The following is a 283-amino-acid chain: Phosphate import ATP-binding protein PstB (283 aa).

A compositionally biased stretch (polar residues) spans 1–20 (MAQTLAQTKQISQSHTFDVS). Residues 1–32 (MAQTLAQTKQISQSHTFDVSQSHHKTPDDTNS) form a disordered region. Positions 37–278 (YSTQNLDLWY…PSNKKTEDYI (242 aa)) constitute an ABC transporter domain. 69-76 (GPSGCGKS) is a binding site for ATP.

This sequence belongs to the ABC transporter superfamily. Phosphate importer (TC 3.A.1.7) family. The complex is composed of two ATP-binding proteins (PstB), two transmembrane proteins (PstC and PstA) and a solute-binding protein (PstS).

It localises to the cell membrane. It catalyses the reaction phosphate(out) + ATP + H2O = ADP + 2 phosphate(in) + H(+). Part of the ABC transporter complex PstSACB involved in phosphate import. Responsible for energy coupling to the transport system. This is Phosphate import ATP-binding protein PstB from Staphylococcus aureus (strain USA300).